Here is a 186-residue protein sequence, read N- to C-terminus: UPF0200 protein Hbut_0338 (186 aa).

ATP is bound at residue 13–20 (GMPGSGKS).

Belongs to the UPF0200 family.

The sequence is that of UPF0200 protein Hbut_0338 from Hyperthermus butylicus (strain DSM 5456 / JCM 9403 / PLM1-5).